The sequence spans 577 residues: Arginine--tRNA ligase (577 aa).

Residues 122 to 132 carry the 'HIGH' region motif; sequence PNVAKEMHVGH.

The protein belongs to the class-I aminoacyl-tRNA synthetase family. Monomer.

The protein localises to the cytoplasm. The enzyme catalyses tRNA(Arg) + L-arginine + ATP = L-arginyl-tRNA(Arg) + AMP + diphosphate. This chain is Arginine--tRNA ligase, found in Escherichia coli (strain ATCC 8739 / DSM 1576 / NBRC 3972 / NCIMB 8545 / WDCM 00012 / Crooks).